The chain runs to 216 residues: Somatotropin (216 aa).

The N-terminal stretch at 1–26 is a signal peptide; that stretch reads MAASPRNSVLLAFALLCLPWPQEVGA. H45 contributes to the Zn(2+) binding site. C78 and C189 are joined by a disulfide. S131 is modified (phosphoserine). Zn(2+) is bound at residue E198. C206 and C214 are oxidised to a cystine.

The protein belongs to the somatotropin/prolactin family.

It localises to the secreted. Plays an important role in growth control. Its major role in stimulating body growth is to stimulate the liver and other tissues to secrete IGF1. It stimulates both the differentiation and proliferation of myoblasts. It also stimulates amino acid uptake and protein synthesis in muscle and other tissues. This Canis lupus familiaris (Dog) protein is Somatotropin (GH1).